The primary structure comprises 179 residues: ATP-dependent protease subunit HslV (179 aa).

The active site involves Thr-7. Positions 162, 165, and 168 each coordinate Na(+).

This sequence belongs to the peptidase T1B family. HslV subfamily. A double ring-shaped homohexamer of HslV is capped on each side by a ring-shaped HslU homohexamer. The assembly of the HslU/HslV complex is dependent on binding of ATP.

Its subcellular location is the cytoplasm. The catalysed reaction is ATP-dependent cleavage of peptide bonds with broad specificity.. Allosterically activated by HslU binding. Functionally, protease subunit of a proteasome-like degradation complex believed to be a general protein degrading machinery. The protein is ATP-dependent protease subunit HslV of Teredinibacter turnerae (strain ATCC 39867 / T7901).